Here is a 476-residue protein sequence, read N- to C-terminus: Calcium uptake protein 1, mitochondrial (476 aa).

The transit peptide at 1-33 (MFRLNSLSALAELAVGSRWYHGGSQPIQIRRRL) directs the protein to the mitochondrion. Residues 68–106 (SDIGDKGKNKDEGDVCNHEKKTADLAPHPEEKKKKRSGF) form a disordered region. The polybasic region stretch occupies residues 99–110 (KKKKRSGFRDRK). Ser122 is modified (phosphoserine). The interval 126 to 129 (KIFR) is k/R-ring. The region spanning 218 to 253 (TPQRNFEIAFKMFDLNGDGEVDMEEFEQVQSIIRSQ) is the EF-hand 1 domain. Residues Asp231, Asn233, Asp235, Glu237, and Glu242 each coordinate Ca(2+). The k/R-ring stretch occupies residues 259 to 263 (RHRDR). The EF-hand 2 domain occupies 408 to 443 (LSDHVCDVVFALFDCDGNGELSNKEFVSIMKQRLMR). Positions 421, 423, 425, 427, and 432 each coordinate Ca(2+). At Arg455 the chain carries Asymmetric dimethylarginine. Residues 455–465 (RLMQAMWKCAQ) form a C-helix region region.

It belongs to the MICU1 family. MICU1 subfamily. Heterodimer; disulfide-linked; heterodimerizes with MICU2 or MICU3. Homodimer; disulfide-linked. Component of the uniplex complex, composed of MCU, EMRE/SMDT1, MICU1 and MICU2 (or MICU3) in a 4:4:1:1 stoichiometry. The composition of calcium sensors within the uniplex complex can differ depending on tissues: a MICU1 homodimer can be present instead of the MICU1-MICU2 heterodimer in skeletal-muscle and kidney. MICU1 is recruited to the uniplex complex by EMRE/SMDT1, and it associates with MCU at low calcium levels, occluding the pore of the MCU channel. Associates with the MICOS complex. Interacts with SLC25A23. Interacts with CHCHD4/MIA40; which introduces the interchain disulfide bond with MICU2. Interacts (when methylated) with UCP2; leading to decrease the calcium sensitivity of MICU1. Post-translationally, phosphorylation at Ser-122 by AKT1 impairs its maturation and stability. In terms of processing, asymmetric dimethylation at Arg-455 by PRMT1 decreases the calcium sensitivity of MICU1 by promoting interaction with UCP2. Degraded by YME1L1 when not complexed as homodimer or heterodimer. Not degraded when complexed as homodimer or heterodimer; the presence of the interchain disulfide bond protecting MICU1 from degradation by YME1L1. As to expression, expressed in epithelial cell lines. Strongly expressed in epidermal keratinocytes and dermal endothelial cells.

It is found in the mitochondrion intermembrane space. The protein localises to the mitochondrion inner membrane. Its activity is regulated as follows. Activated by spermine, kaempferol and SB202190, which bind MICU1 and prevent MCU pore occlusion in absence of calcium. Functionally, calcium sensor of the mitochondrial calcium uniporter (MCU) channel, which senses calcium level via its EF-hand domains. MICU1 and MICU2 (or MICU3) form a disulfide-linked heterodimer that stimulates and inhibits MCU activity, depending on the concentration of calcium. At low calcium levels, MICU1 occludes the pore of the MCU channel, preventing mitochondrial calcium uptake. At higher calcium levels, calcium-binding to MICU1 and MICU2 (or MICU3) induces a conformational change that weakens MCU-MICU1 interactions and moves the MICU1-MICU2 heterodimer away from the pore, allowing calcium permeation through the MCU channel. Also required to protect against manganese toxicity by preventing manganese uptake by MCU: mechanistically, manganese-binding to its EF-hand domains does not induce any conformational change, maintaining MCU pore occlusion. Also acts as a barrier for inhibitors of the MCU channel, such as ruthenium red or its derivative Ru360. Acts as a regulator of mitochondrial cristae structure independently of its ability to regulate the mitochondrial calcium uniporter channel. Regulates glucose-dependent insulin secretion in pancreatic beta-cells by regulating mitochondrial calcium uptake. Induces T-helper 1-mediated autoreactivity, which is accompanied by the release of IFNG. In terms of biological role, isoform that regulates mitochondrial calcium uniporter (MCU) in the skeletal muscle. Compared to other isoforms, this isoform has higher affinity for calcium, promoting mitochondrial calcium uptake at lower calcium concentrations. This allows a rapid response of mitochondrial metabolism and ensures sustained ATP production needed for resistance and strenuous exercise. The polypeptide is Calcium uptake protein 1, mitochondrial (Homo sapiens (Human)).